The sequence spans 366 residues: Gelsolin-like protein 2 (366 aa).

Gelsolin-like repeat units lie at residues 55–139 (NFKV…DLFL), 177–252 (KHIV…HEFY), and 286–327 (KSTV…AQEK). Residues 100–116 (KSTQDEYCVAAYKTVEL) are actin binding. The tract at residues 104–107 (DEYC) is actin-actin interfilament contact point.

It belongs to the villin/gelsolin family. As to quaternary structure, interacts with actin monomers and filaments. In terms of tissue distribution, expressed in circular and longitudinal muscle, pseudohearts, pharynx and gizzard. Not expressed in seminal vesicles.

It localises to the cytoplasm. The protein localises to the cytoskeleton. In terms of biological role, calcium-regulated protein that binds to the plus (or barbed) ends of actin monomers or filaments, preventing monomer exchange (end-blocking or capping). Can promote the assembly of monomers into filaments (nucleation) as well as sever existing filaments. This Lumbricus terrestris (Common earthworm) protein is Gelsolin-like protein 2.